A 93-amino-acid chain; its full sequence is Small ribosomal subunit protein bS6 (93 aa).

It belongs to the bacterial ribosomal protein bS6 family.

Functionally, binds together with bS18 to 16S ribosomal RNA. This Treponema denticola (strain ATCC 35405 / DSM 14222 / CIP 103919 / JCM 8153 / KCTC 15104) protein is Small ribosomal subunit protein bS6.